Here is a 298-residue protein sequence, read N- to C-terminus: Nucleotide-binding protein Csal_2229 (298 aa).

Residue 8 to 15 (GRSGSGKS) participates in ATP binding. 59 to 62 (DARN) serves as a coordination point for GTP.

This sequence belongs to the RapZ-like family.

Functionally, displays ATPase and GTPase activities. In Chromohalobacter salexigens (strain ATCC BAA-138 / DSM 3043 / CIP 106854 / NCIMB 13768 / 1H11), this protein is Nucleotide-binding protein Csal_2229.